Here is a 301-residue protein sequence, read N- to C-terminus: GTPase Era (301 aa).

In terms of domain architecture, Era-type G spans 7–175; sequence YCGFIAIVGR…AAIVRKHLPE (169 aa). The G1 stretch occupies residues 15 to 22; sequence GRPNVGKS. GTP is bound at residue 15 to 22; it reads GRPNVGKS. Residues 41-45 are G2; that stretch reads QTTRH. The G3 stretch occupies residues 62–65; sequence DTPG. Residues 62–66 and 124–127 each bind GTP; these read DTPGL and NKVD. The tract at residues 124-127 is G4; that stretch reads NKVD. A G5 region spans residues 154 to 156; that stretch reads ISA. Residues 206–283 form the KH type-2 domain; sequence LGAELPYSVT…HLELWVKVKS (78 aa).

Belongs to the TRAFAC class TrmE-Era-EngA-EngB-Septin-like GTPase superfamily. Era GTPase family. In terms of assembly, monomer.

It is found in the cytoplasm. Its subcellular location is the cell inner membrane. Functionally, an essential GTPase that binds both GDP and GTP, with rapid nucleotide exchange. Plays a role in 16S rRNA processing and 30S ribosomal subunit biogenesis and possibly also in cell cycle regulation and energy metabolism. The polypeptide is GTPase Era (Escherichia coli (strain K12 / DH10B)).